A 429-amino-acid chain; its full sequence is Phosphoribosylamine--glycine ligase (429 aa).

Positions lysine 109 to glutamate 316 constitute an ATP-grasp domain. Leucine 135–serine 196 is a binding site for ATP. The interval serine 212 to alanine 236 is disordered. The span at glutamine 213 to threonine 223 shows a compositional bias: basic and acidic residues. Mg(2+)-binding residues include glutamate 286 and asparagine 288.

It belongs to the GARS family. In terms of assembly, monomer. The cofactor is Mg(2+). Requires Mn(2+) as cofactor.

The catalysed reaction is 5-phospho-beta-D-ribosylamine + glycine + ATP = N(1)-(5-phospho-beta-D-ribosyl)glycinamide + ADP + phosphate + H(+). Its pathway is purine metabolism; IMP biosynthesis via de novo pathway; N(1)-(5-phospho-D-ribosyl)glycinamide from 5-phospho-alpha-D-ribose 1-diphosphate: step 2/2. This Escherichia coli O6:H1 (strain CFT073 / ATCC 700928 / UPEC) protein is Phosphoribosylamine--glycine ligase.